A 437-amino-acid polypeptide reads, in one-letter code: MNNIVAIVGRPNVGKSTLFNRLTQSHQAIVDEEEGTTRDRQYSKVEWCGQIFSIIDTGGWVLNSDDIFEEEINKQVQIAIEEADIILFLVDVIHGTTDLDQQIAALLRREKKLVILVSNKADNYKLYAQSAEFYALGLGDPYNVSAINGSGTGELLDYLISNFTKKVDNKPEITIPAIAIVGKPNVGKSSLINALTNEERNIVTNIAGTTRDSIYTLYDKFGLKFYLVDTAGICKKKKVEENSEYYSIIRAIRSIESSDICILLIDATQCIMAQDINIFSIIQKNEKGLIIVVNKWDLIQNKNPKTIYTFENAIRQRTAPFTDVPIIFSSAQTKKRIYKILQVAKEVYDIRQIKIPTSQLNRILLPIIAKTPPPINKGKVVRIKYVTQLTNTIIPSFVFFCNLPKWIKTPYKRFLENQMRKNWKLTGTPINIFMREK.

2 consecutive EngA-type G domains span residues 3 to 167 (NIVA…TKKV) and 176 to 352 (PAIA…DIRQ). GTP-binding positions include 9 to 16 (GRPNVGKS), 56 to 60 (DTGGW), 119 to 122 (NKAD), 182 to 189 (GKPNVGKS), 229 to 233 (DTAGI), and 294 to 297 (NKWD). The KH-like domain occupies 353–437 (IKIPTSQLNR…TPINIFMREK (85 aa)).

Belongs to the TRAFAC class TrmE-Era-EngA-EngB-Septin-like GTPase superfamily. EngA (Der) GTPase family. Associates with the 50S ribosomal subunit.

GTPase that plays an essential role in the late steps of ribosome biogenesis. This is GTPase Der from Azobacteroides pseudotrichonymphae genomovar. CFP2.